Reading from the N-terminus, the 640-residue chain is Kelch-like protein 17 (640 aa).

Residues 1-50 (MQPRGERPAGRTQSPEHSSPGPGPEAPPPPQPPAPEAERARPRQARPAAP) form a disordered region. Positions 21–35 (GPGPEAPPPPQPPAP) are enriched in pro residues. Residues 90 to 157 (CDIVLHVAAK…AYTAEIVVGE (68 aa)) enclose the BTB domain. The region spanning 192-294 (CLGIRGFADT…SRDFLLGHVD (103 aa)) is the BACK domain. Positions 287-639 (DFLLGHVDAE…SPTLSVSSTS (353 aa)) are interaction with F-actin. 6 Kelch repeats span residues 341-387 (VLFA…AVGN), 388-434 (RLYA…ALHG), 436-481 (LYAA…TLDG), 482-528 (NLYA…VLEG), 530-575 (LYVA…AMDG), and 576-622 (WLYA…VLEL). The interaction with PDZK1 stretch occupies residues 638–640 (TSL).

As to quaternary structure, interacts with F-actin; the interaction disrupts the F-actin structures and leads to marked changes of neuronal morphology. Component of a complex, composed of PDZK1, SYNGAP1, KLHL17 and NMDA receptors. Interacts directly with PDZK1 (via PDZ1 domain); the interaction is important for integrity of actin cytoskeleton structures in neurons. Interacts with DLG4 and SYNGAP1. Interacts (via kelch repeats) with GRIK2 (via C-terminus); the interaction targets GRIK2 for degradation via ubiquitin-proteasome pathway. Interacts with GRIK1. Interacts with (via BTB domain) CUL3; the interaction regulates surface GRIK2 expression.

Its subcellular location is the postsynaptic density. It localises to the synapse. Its pathway is protein modification; protein ubiquitination. In terms of biological role, substrate-recognition component of some cullin-RING-based BCR (BTB-CUL3-RBX1) E3 ubiquitin-protein ligase complexes. The BCR(KLHL17) complex mediates the ubiquitination and subsequent degradation of GLUR6. May play a role in the actin-based neuronal function. The polypeptide is Kelch-like protein 17 (Klhl17) (Mus musculus (Mouse)).